The following is a 176-amino-acid chain: Signal peptidase complex catalytic subunit SEC11 (176 aa).

Over 1 to 9 (MNLRQQLGS) the chain is Cytoplasmic. A helical; Signal-anchor for type II membrane protein membrane pass occupies residues 10 to 30 (GLSMAMVLASAFAFWKLFSIV). Residues 31 to 176 (TMSNSPIVVV…LGLSALVQDE (146 aa)) are Lumenal-facing. Active-site charge relay system residues include Ser-44, His-83, and Asp-118. A C-terminal short (CTS) helix region spans residues 162–173 (ALMALLGLSALV).

The protein belongs to the peptidase S26B family. In terms of assembly, component of the signal peptidase complex (SPC) composed of a catalytic subunit SEC11 and three accessory subunits SPC1, SPC2 and SPC3. The complex induces a local thinning of the ER membrane which is used to measure the length of the signal peptide (SP) h-region of protein substrates. This ensures the selectivity of the complex towards h-regions shorter than 18-20 amino acids. SPC associates with the translocon complex.

The protein resides in the endoplasmic reticulum membrane. The catalysed reaction is Cleavage of hydrophobic, N-terminal signal or leader sequences from secreted and periplasmic proteins.. Its function is as follows. Catalytic component of the signal peptidase complex (SPC) which catalyzes the cleavage of N-terminal signal sequences from nascent proteins as they are translocated into the lumen of the endoplasmic reticulum. Specifically cleaves N-terminal signal peptides that contain a hydrophobic alpha-helix (h-region) shorter than 18-20 amino acids. The protein is Signal peptidase complex catalytic subunit SEC11 (SEC11) of Ogataea parapolymorpha (strain ATCC 26012 / BCRC 20466 / JCM 22074 / NRRL Y-7560 / DL-1) (Yeast).